The sequence spans 435 residues: Hexane cyclase xenF (435 aa).

The signal sequence occupies residues 1-23; the sequence is MSPAANMFRTLTLTALVSAVVSA. Asn81 and Asn156 each carry an N-linked (GlcNAc...) asparagine glycan.

This sequence belongs to the Diels-Alderase family.

Its pathway is mycotoxin biosynthesis. Hexane cyclase; part of the gene cluster that mediates the biosynthesis of xenoacremones such as xenoacremone A, a compound that shows inhibitory activity toward the PI3K/AKT signaling pathway and which has the ability to induce apoptosis of A549 lung cancer cells. Within the pathway, cooperation of the hybrid PKS-NRPS xenE and the trans-acting enoyl reductase xenG is responsible for the formation of the reduced tyrosine-nonaketide derivative. The alpha/beta hydrolase xenA then accelerates intramolecular nucleophilic attack to give a pyrrolidone derivative. Subsequently, three enzymes, xenF, xenD, and xenC, coordinately participate in the conversion to xenoacremone B. XenF catalyzes sigmatropic rearrangement to form an A-ring, which leads to an unusual intermediate with a hexane ring, which is required for the formation of the tricarbocyclic product. Epoxidation catalyzed by xenD and the formation of the paracyclophane ether catalyzed by xenC initiate a spontaneous intramolecular Diels-Alder (IMDA) reaction to yield xenoacremone B. Spontaneous hydration of xenoacremone B leads to the formation of xenoacremone A, which undergoes subsequent methylation to afford xenoacremone C. The sequence is that of Hexane cyclase xenF from Xenoacremonium sinensis (Endophyte fungus).